The sequence spans 819 residues: MADKLALPLLLPCTPSSKPYSHDQNHHISRTPFLTTSLSSPPPPPVEPLLHDVFLHQNPNSRQPISSQTSRNRNRTRIGKSRDPNLGKPWSYHGLSPQGQQVLRSLIEPNFDSGQLDSVLSELFEPFKDKPESTSSELLAFLKGLGFHKKFDLALRAFDWFMKQKDYQSMLDNSVVAIIISMLGKEGRVSSAANMFNGLQEDGFSLDVYSYTSLISAFANSGRYREAVNVFKKMEEDGCKPTLITYNVILNVFGKMGTPWNKITSLVEKMKSDGIAPDAYTYNTLITCCKRGSLHQEAAQVFEEMKAAGFSYDKVTYNALLDVYGKSHRPKEAMKVLNEMVLNGFSPSIVTYNSLISAYARDGMLDEAMELKNQMAEKGTKPDVFTYTTLLSGFERAGKVESAMSIFEEMRNAGCKPNICTFNAFIKMYGNRGKFTEMMKIFDEINVCGLSPDIVTWNTLLAVFGQNGMDSEVSGVFKEMKRAGFVPERETFNTLISAYSRCGSFEQAMTVYRRMLDAGVTPDLSTYNTVLAALARGGMWEQSEKVLAEMEDGRCKPNELTYCSLLHAYANGKEIGLMHSLAEEVYSGVIEPRAVLLKTLVLVCSKCDLLPEAERAFSELKERGFSPDITTLNSMVSIYGRRQMVAKANGVLDYMKERGFTPSMATYNSLMYMHSRSADFGKSEEILREILAKGIKPDIISYNTVIYAYCRNTRMRDASRIFSEMRNSGIVPDVITYNTFIGSYAADSMFEEAIGVVRYMIKHGCRPNQNTYNSIVDGYCKLNRKDEAKLFVEDLRNLDPHAPKGEDLRLLERIVKKWP.

Positions 57–93 (QNPNSRQPISSQTSRNRNRTRIGKSRDPNLGKPWSYH) are disordered. PPR repeat units lie at residues 172–206 (DNSV…GFSL), 207–241 (DVYS…GCKP), 242–277 (TLIT…GIAP), 278–312 (DAYT…GFSY), 313–347 (DKVT…GFSP), 348–382 (SIVT…GTKP), 383–417 (DVFT…GCKP), 418–452 (NICT…GLSP), 453–487 (DIVT…GFVP), 488–522 (ERET…GVTP), 523–557 (DLST…RCKP), 558–592 (NELT…VIEP), 593–627 (RAVL…GFSP), 628–662 (DITT…GFTP), 663–697 (SMAT…GIKP), 698–732 (DIIS…GIVP), 733–767 (DVIT…GCRP), and 768–802 (NQNT…DPHA).

This sequence belongs to the PPR family. P subfamily.

This is Pentatricopeptide repeat-containing protein At5g02860 from Arabidopsis thaliana (Mouse-ear cress).